The sequence spans 150 residues: HTH-type transcriptional regulator LrpA (150 aa).

The region spanning 5–66 (LDDIDRILVR…RINPEAVGHL (62 aa)) is the HTH asnC-type domain. Residues 24–43 (LSELATRAGLSVSAVQSRVR) constitute a DNA-binding region (H-T-H motif). Residues Val100, Gly102, and Glu104 each contribute to the L-phenylalanine site.

Homohexadecamer in the absence of any added ligand. Homooctamer. Tetramer of dimers. In the presence of phenylalanine, the hexadecamer dissociates into an octamer, which further dissociates partially into lower-order oligomers.

With respect to regulation, the DNA-binding activity of LrpA is modulated by interaction of LrpA with various effector molecules, including amino acids and vitamins. The DNA binding affinity is decreased by several amino acids, including phenylalanine, tyrosine, tryptophan, histidine, leucine and aspartate. Preferentially binds to aromatic amino acids. Besides amino acids, the binding affinity is also reduced by vitamins, including B1, B3, B6, VC, B7, B9, B12, VA and VK3. Its function is as follows. Transcriptional regulator that probably plays an important role in M.tuberculosis persistence. Regulates the expression of several genes, including lat, rsmG, whiB2, lsr2 and Rv2011c. Acts by binding directly to the promoter region of the target genes. This chain is HTH-type transcriptional regulator LrpA, found in Mycobacterium tuberculosis (strain ATCC 25618 / H37Rv).